Here is a 303-residue protein sequence, read N- to C-terminus: Aspartate carbamoyltransferase catalytic subunit (303 aa).

Positions 54 and 55 each coordinate carbamoyl phosphate. Lys83 lines the L-aspartate pocket. The carbamoyl phosphate site is built by Arg104, His132, and Gln135. L-aspartate contacts are provided by Arg164 and Arg226. Residues Leu265 and Pro266 each coordinate carbamoyl phosphate.

The protein belongs to the aspartate/ornithine carbamoyltransferase superfamily. ATCase family. In terms of assembly, heterooligomer of catalytic and regulatory chains.

The catalysed reaction is carbamoyl phosphate + L-aspartate = N-carbamoyl-L-aspartate + phosphate + H(+). It functions in the pathway pyrimidine metabolism; UMP biosynthesis via de novo pathway; (S)-dihydroorotate from bicarbonate: step 2/3. Functionally, catalyzes the condensation of carbamoyl phosphate and aspartate to form carbamoyl aspartate and inorganic phosphate, the committed step in the de novo pyrimidine nucleotide biosynthesis pathway. The protein is Aspartate carbamoyltransferase catalytic subunit of Methanocorpusculum labreanum (strain ATCC 43576 / DSM 4855 / Z).